Consider the following 152-residue polypeptide: UPF0756 membrane protein Daud_1310 (152 aa).

4 consecutive transmembrane segments (helical) span residues 14–34 (LVGV…LLFI), 51–71 (LELG…NGKI), 76–96 (IIYN…ALAT), and 112–132 (IIFG…GMPV).

Belongs to the UPF0756 family.

It is found in the cell membrane. The polypeptide is UPF0756 membrane protein Daud_1310 (Desulforudis audaxviator (strain MP104C)).